The primary structure comprises 101 residues: MYISRNMEQWTKFIETLRIAFNDGKEQDLLTLLLTPDERDAIGLRLQIVAQLLDKKIPQREIQQNLNTSAATITRGSNMLKLMSPDFMEWVKKHTNETENT.

Residues 59–82 (QREIQQNLNTSAATITRGSNMLKL) mediate DNA binding.

Belongs to the TrpR family. Homodimer.

The protein resides in the cytoplasm. In terms of biological role, this protein is an aporepressor. When complexed with L-tryptophan it binds the operator region of the trp operon and prevents the initiation of transcription. The chain is Trp operon repressor homolog from Mannheimia succiniciproducens (strain KCTC 0769BP / MBEL55E).